Reading from the N-terminus, the 81-residue chain is Cytotoxin 4 (81 aa).

The N-terminal stretch at 1 to 21 (MKTLLLTLVVVTIVCLDLGYT) is a signal peptide. 4 disulfides stabilise this stretch: C24/C42, C35/C59, C63/C74, and C75/C80.

This sequence belongs to the three-finger toxin family. Short-chain subfamily. Type IA cytotoxin sub-subfamily. As to quaternary structure, monomer in solution; Homodimer and oligomer in the presence of negatively charged lipids forming a pore with a size ranging between 20 and 30 Angstroms. In terms of tissue distribution, expressed by the venom gland.

It is found in the secreted. The protein localises to the target cell membrane. Its function is as follows. Basic protein that bind to cell membrane and depolarizes cardiomyocytes. This cytotoxin also shows lytic activities, but 2-fold more important than that of CTX-A2. It binds to the integrin alpha-V/beta-3 with a moderate affinity. Inhibits protein kinase C. It may interact with sulfatides in the cell membrane, which induces pore formation and cell internalization and is responsible for cytotoxicity in cardiomyocytes. It may also target the mitochondrial membrane and induces mitochondrial swelling and fragmentation. In Naja atra (Chinese cobra), this protein is Cytotoxin 4.